Consider the following 305-residue polypeptide: UDP-N-acetylenolpyruvoylglucosamine reductase (305 aa).

Residues 35-214 (VGGPAQALFT…RARMNEVQAH (180 aa)) form the FAD-binding PCMH-type domain. Arginine 179 is an active-site residue. Serine 228 serves as the catalytic Proton donor. Residue glutamate 298 is part of the active site.

The protein belongs to the MurB family. FAD is required as a cofactor.

It is found in the cytoplasm. It carries out the reaction UDP-N-acetyl-alpha-D-muramate + NADP(+) = UDP-N-acetyl-3-O-(1-carboxyvinyl)-alpha-D-glucosamine + NADPH + H(+). Its pathway is cell wall biogenesis; peptidoglycan biosynthesis. Cell wall formation. The sequence is that of UDP-N-acetylenolpyruvoylglucosamine reductase from Nitrobacter winogradskyi (strain ATCC 25391 / DSM 10237 / CIP 104748 / NCIMB 11846 / Nb-255).